Here is a 1288-residue protein sequence, read N- to C-terminus: Symplekin (1288 aa).

The segment at 1–124 (MASSSGDSVT…NMLLRDENVN (124 aa)) is interaction with HSF1. Serine 13 is subject to Phosphoserine. HEAT repeat units lie at residues 31–64 (TTSE…LIIN), 67–101 (PTLL…EACK), 104–146 (IELL…WMVK), 153–192 (LQEA…GLIV), and 227–266 (VLWE…IARQ). Residues 335-392 (IARNMPSSKDSRKRPRDDTDSTLKKMKLEPNLGEDDEDKDLEPGPSGTSKASAQISGQ) form a disordered region. Residues 345–360 (SRKRPRDDTDSTLKKM) carry the Nuclear localization signal motif. The span at 349 to 362 (PRDDTDSTLKKMKL) shows a compositional bias: basic and acidic residues. Residue lysine 361 forms a Glycyl lysine isopeptide (Lys-Gly) (interchain with G-Cter in SUMO1); alternate linkage. Lysine 361 participates in a covalent cross-link: Glycyl lysine isopeptide (Lys-Gly) (interchain with G-Cter in SUMO2); alternate. Polar residues predominate over residues 380–392 (SGTSKASAQISGQ). Residue lysine 483 forms a Glycyl lysine isopeptide (Lys-Gly) (interchain with G-Cter in SUMO2) linkage. Residue serine 494 is modified to Phosphoserine. 2 disordered regions span residues 1130–1151 (PAPA…PPQD) and 1163–1288 (LKRQ…KGNS). Over residues 1131–1149 (APAPAPAPAPAPAPAPRPP) the composition is skewed to pro residues. The span at 1163–1173 (LKRQLEEEQKQ) shows a compositional bias: basic and acidic residues. Serine 1238 and serine 1239 each carry phosphoserine. Residue lysine 1256 forms a Glycyl lysine isopeptide (Lys-Gly) (interchain with G-Cter in SUMO1) linkage. Serine 1260 is modified (phosphoserine). Basic and acidic residues predominate over residues 1267–1288 (AVEEALKTSSPETREPESKGNS). Threonine 1274 is modified (phosphothreonine). Serine 1276 is subject to Phosphoserine.

Belongs to the Symplekin family. As to quaternary structure, found in a heat-sensitive complex at least composed of several cleavage and polyadenylation specific and cleavage stimulation factors. Interacts with CPSF2, CPSF3 and CSTF2. Interacts (via N-terminus) with HSF1; this interaction is direct and occurs upon heat shock. Interacts with SSU72.

It localises to the cytoplasm. The protein resides in the cytoskeleton. It is found in the cell junction. The protein localises to the tight junction. Its subcellular location is the cell membrane. It localises to the nucleus. The protein resides in the nucleoplasm. Functionally, scaffold protein that functions as a component of a multimolecular complex involved in histone mRNA 3'-end processing. Specific component of the tight junction (TJ) plaque, but might not be an exclusively junctional component. May have a house-keeping rule. Is involved in pre-mRNA polyadenylation. Enhances SSU72 phosphatase activity. This Mus musculus (Mouse) protein is Symplekin (Sympk).